A 107-amino-acid polypeptide reads, in one-letter code: DNA-directed RNA polymerase subunit omega (107 aa).

It belongs to the RNA polymerase subunit omega family. In terms of assembly, the RNAP catalytic core consists of 2 alpha, 1 beta, 1 beta' and 1 omega subunit. When a sigma factor is associated with the core the holoenzyme is formed, which can initiate transcription.

The catalysed reaction is RNA(n) + a ribonucleoside 5'-triphosphate = RNA(n+1) + diphosphate. Functionally, promotes RNA polymerase assembly. Latches the N- and C-terminal regions of the beta' subunit thereby facilitating its interaction with the beta and alpha subunits. The chain is DNA-directed RNA polymerase subunit omega from Oenococcus oeni (strain ATCC BAA-331 / PSU-1).